The sequence spans 492 residues: UDP-N-acetylmuramyl-tripeptide synthetase 2 (492 aa).

Residue Ser30 coordinates UDP-N-acetyl-alpha-D-muramoyl-L-alanyl-D-glutamate. 111 to 117 (GTNGKTT) is an ATP binding site. UDP-N-acetyl-alpha-D-muramoyl-L-alanyl-D-glutamate is bound by residues 154-155 (TT), Ser181, Gln187, and Arg189. An N6-carboxylysine modification is found at Lys221.

This sequence belongs to the MurCDEF family. MurE subfamily. Post-translationally, carboxylation is probably crucial for Mg(2+) binding and, consequently, for the gamma-phosphate positioning of ATP.

It localises to the cytoplasm. It functions in the pathway cell wall biogenesis; peptidoglycan biosynthesis. Its function is as follows. Catalyzes the addition of an amino acid to the nucleotide precursor UDP-N-acetylmuramoyl-L-alanyl-D-glutamate (UMAG) in the biosynthesis of bacterial cell-wall peptidoglycan. This is UDP-N-acetylmuramyl-tripeptide synthetase 2 from Oceanobacillus iheyensis (strain DSM 14371 / CIP 107618 / JCM 11309 / KCTC 3954 / HTE831).